A 527-amino-acid polypeptide reads, in one-letter code: Glucose-6-phosphate isomerase (527 aa).

The active-site Proton donor is E323. Active-site residues include H352 and K454.

This sequence belongs to the GPI family.

The protein resides in the cytoplasm. It carries out the reaction alpha-D-glucose 6-phosphate = beta-D-fructose 6-phosphate. The protein operates within carbohydrate biosynthesis; gluconeogenesis. It participates in carbohydrate degradation; glycolysis; D-glyceraldehyde 3-phosphate and glycerone phosphate from D-glucose: step 2/4. Its function is as follows. Catalyzes the reversible isomerization of glucose-6-phosphate to fructose-6-phosphate. This chain is Glucose-6-phosphate isomerase, found in Prochlorococcus marinus (strain MIT 9515).